We begin with the raw amino-acid sequence, 569 residues long: Urease subunit beta (569 aa).

The 439-residue stretch at 131–569 (GGIDTHIHFI…VSLGQLYCLF (439 aa)) folds into the Urease domain. Ni(2+)-binding residues include H136, H138, and K219. K219 bears the N6-carboxylysine mark. Position 221 (H221) interacts with substrate. Positions 248 and 274 each coordinate Ni(2+). Catalysis depends on H322, which acts as the Proton donor. D362 contacts Ni(2+).

The protein belongs to the metallo-dependent hydrolases superfamily. Urease alpha subunit family. Heterohexamer of 3 UreA (alpha) and 3 UreB (beta) subunits. The cofactor is Ni cation. Carboxylation allows a single lysine to coordinate two nickel ions.

It localises to the cytoplasm. The catalysed reaction is urea + 2 H2O + H(+) = hydrogencarbonate + 2 NH4(+). It functions in the pathway nitrogen metabolism; urea degradation; CO(2) and NH(3) from urea (urease route): step 1/1. The sequence is that of Urease subunit beta from Helicobacter hepaticus (strain ATCC 51449 / 3B1).